The following is a 408-amino-acid chain: Peptidoglycan muramidase Tse3 (408 aa).

Asn181, Asp253, Gln254, Glu258, Glu375, Ser378, Arg379, Asp382, and Asn384 together coordinate Ca(2+).

In terms of assembly, forms a heterotetramer with Tsi3 consisting of two Tse3 dimers and two Tsi3 dimers. Formation of the complex inactivates Tse3 enzymatic activity. The cofactor is Ca(2+).

The protein localises to the host membrane. It is found in the secreted. The enzyme catalyses Hydrolysis of (1-&gt;4)-beta-linkages between N-acetylmuramic acid and N-acetyl-D-glucosamine residues in a peptidoglycan and between N-acetyl-D-glucosamine residues in chitodextrins.. Its activity is regulated as follows. Enzymatic activity depends on membrane binding. In terms of biological role, toxin secreted by the H1 type VI (H1-T6SS) secretion system into the periplasm of recipient cells. Degrades peptidoglycan via muramidase activity thereby helping itself to compete with other bacteria. To protect itself, the bacterium synthesizes immunity protein Tsi3 that specifically interacts with and inactivates cognate toxin. In Pseudomonas aeruginosa (strain ATCC 15692 / DSM 22644 / CIP 104116 / JCM 14847 / LMG 12228 / 1C / PRS 101 / PAO1), this protein is Peptidoglycan muramidase Tse3.